The following is an 85-amino-acid chain: Sodium channel neurotoxin MeuNaTxalpha-2 (85 aa).

A signal peptide spans M1–S19. Positions R21–R83 constitute an LCN-type CS-alpha/beta domain. 4 disulfide bridges follow: C31–C82, C35–C55, C41–C65, and C45–C67. Residue R83 is modified to Arginine amide.

The protein belongs to the long (4 C-C) scorpion toxin superfamily. Sodium channel inhibitor family. Alpha subfamily. As to expression, expressed by the venom gland.

It localises to the secreted. In terms of biological role, alpha toxins bind voltage-independently at site-3 of sodium channels (Nav) and inhibit the inactivation of the activated channels, thereby blocking neuronal transmission. This toxin inhibits inactivation of Nav1.4/SCN4A (EC(50)=2.23 uM) and drosophila DmNav1 (EC(50)=220 nM). The toxin (1 uM) does not significantly shift the midpoint of activation at the two channels, but induces a significant depolarizing shift in the V(1/2) of inactivation of the channels. In addition, the toxin accelerates the recovery from fast inactivation in Nav1.4/SCN4A and DmNav1. It also shows antimicrobial activity. The polypeptide is Sodium channel neurotoxin MeuNaTxalpha-2 (Mesobuthus eupeus (Lesser Asian scorpion)).